A 361-amino-acid chain; its full sequence is Chorismate synthase (361 aa).

Positions 48 and 54 each coordinate NADP(+). FMN is bound by residues 125–127, 238–239, glycine 278, 293–297, and arginine 319; these read RSS, NA, and KPTSS.

The protein belongs to the chorismate synthase family. In terms of assembly, homotetramer. Requires FMNH2 as cofactor.

It carries out the reaction 5-O-(1-carboxyvinyl)-3-phosphoshikimate = chorismate + phosphate. Its pathway is metabolic intermediate biosynthesis; chorismate biosynthesis; chorismate from D-erythrose 4-phosphate and phosphoenolpyruvate: step 7/7. Functionally, catalyzes the anti-1,4-elimination of the C-3 phosphate and the C-6 proR hydrogen from 5-enolpyruvylshikimate-3-phosphate (EPSP) to yield chorismate, which is the branch point compound that serves as the starting substrate for the three terminal pathways of aromatic amino acid biosynthesis. This reaction introduces a second double bond into the aromatic ring system. The sequence is that of Chorismate synthase from Vibrio campbellii (strain ATCC BAA-1116).